Consider the following 715-residue polypeptide: uncharacterized protein (715 aa).

This is an uncharacterized protein from Mycobacterium tuberculosis (strain CDC 1551 / Oshkosh).